The following is a 742-amino-acid chain: Ferric enterobactin receptor PirA (742 aa).

Residues 1-28 form the signal peptide; the sequence is MYPQFRRGHLAAAVLFASSSLLGGQALA. The TBDR plug domain maps to 57–184; the sequence is QELKQAPGVS…AGGVVNIITK (128 aa). 2 disordered regions span residues 91–112 and 409–435; these read GVNL…IDIR and SSLK…PKSK. The span at 94–108 shows a compositional bias: polar residues; the sequence is LTGNSSSGQRGNNRQ. The 554-residue stretch at 189 to 742 folds into the TBDR beta-barrel domain; sequence RLRGSMTVFT…AYYVSMTTSF (554 aa). Cysteine 516 and cysteine 525 are disulfide-bonded. Residues 725-742 carry the TonB C-terminal box motif; that stretch reads ATYNEPGRAYYVSMTTSF.

This sequence belongs to the TonB-dependent receptor family.

The protein resides in the cell outer membrane. Specific receptor for the siderophore ferric enterobactin. Probably involved in the transport of siderophores, including host catecholamines such as L-DOPA. The protein is Ferric enterobactin receptor PirA of Pseudomonas aeruginosa (strain ATCC 15692 / DSM 22644 / CIP 104116 / JCM 14847 / LMG 12228 / 1C / PRS 101 / PAO1).